The sequence spans 259 residues: Phosphate import ATP-binding protein PstB (259 aa).

The ABC transporter domain occupies 13 to 254 (IAVKNLNFFY…PTRKETEDYI (242 aa)). ATP is bound at residue 45–52 (GPSGCGKS).

Belongs to the ABC transporter superfamily. Phosphate importer (TC 3.A.1.7) family. As to quaternary structure, the complex is composed of two ATP-binding proteins (PstB), two transmembrane proteins (PstC and PstA) and a solute-binding protein (PstS).

Its subcellular location is the cell inner membrane. It catalyses the reaction phosphate(out) + ATP + H2O = ADP + 2 phosphate(in) + H(+). Its function is as follows. Part of the ABC transporter complex PstSACB involved in phosphate import. Responsible for energy coupling to the transport system. The protein is Phosphate import ATP-binding protein PstB of Albidiferax ferrireducens (strain ATCC BAA-621 / DSM 15236 / T118) (Rhodoferax ferrireducens).